Consider the following 245-residue polypeptide: 1-(5-phosphoribosyl)-5-[(5-phosphoribosylamino)methylideneamino] imidazole-4-carboxamide isomerase (245 aa).

Asp-7 functions as the Proton acceptor in the catalytic mechanism. The active-site Proton donor is Asp-129.

It belongs to the HisA/HisF family.

Its subcellular location is the cytoplasm. It catalyses the reaction 1-(5-phospho-beta-D-ribosyl)-5-[(5-phospho-beta-D-ribosylamino)methylideneamino]imidazole-4-carboxamide = 5-[(5-phospho-1-deoxy-D-ribulos-1-ylimino)methylamino]-1-(5-phospho-beta-D-ribosyl)imidazole-4-carboxamide. Its pathway is amino-acid biosynthesis; L-histidine biosynthesis; L-histidine from 5-phospho-alpha-D-ribose 1-diphosphate: step 4/9. The chain is 1-(5-phosphoribosyl)-5-[(5-phosphoribosylamino)methylideneamino] imidazole-4-carboxamide isomerase from Citrobacter koseri (strain ATCC BAA-895 / CDC 4225-83 / SGSC4696).